Consider the following 155-residue polypeptide: Fibroblast growth factor 2 (155 aa).

Residues 1-9 (MAAGSITTL) constitute a propeptide that is removed on maturation. The segment at 1–20 (MAAGSITTLPALPEDGGSGA) is disordered. Residue Asn-36 participates in heparin binding. The Cell attachment site; atypical signature appears at 46–48 (DGR). Tyr-82 carries the post-translational modification Phosphotyrosine; by TEC. The Cell attachment site; atypical signature appears at 88 to 90 (DGR). A Glycyl lysine isopeptide (Lys-Gly) (interchain with G-Cter in SUMO1) cross-link involves residue Lys-95. The interval 128–144 (KRTGQYKLGPKTGPGQK) is heparin-binding.

Belongs to the heparin-binding growth factors family. Monomer. Homodimer. Interacts with FGFR1, FGFR2, FGFR3 and FGFR4. Affinity between fibroblast growth factors (FGFs) and their receptors is increased by heparan sulfate glycosaminoglycans that function as coreceptors. Interacts with CSPG4, FGFBP1 and TEC. Found in a complex with FGFBP1, FGF1 and FGF2. Interacts with FGFBP3. Interacts with integrin ITGAV:ITGB3; the interaction is required for FGF2 signaling. Interacts with SNORC (via the extracellular domain). Interacts with glypican GPC3. In terms of processing, phosphorylation at Tyr-82 regulates FGF2 unconventional secretion.

It is found in the secreted. The protein resides in the nucleus. Its function is as follows. Acts as a ligand for FGFR1, FGFR2, FGFR3 and FGFR4. Also acts as an integrin ligand which is required for FGF2 signaling. Binds to integrin ITGAV:ITGB3. Plays an important role in the regulation of cell survival, cell division, cell differentiation and cell migration. Functions as a potent mitogen in vitro. Can induce angiogenesis. Mediates phosphorylation of ERK1/2 and thereby promotes retinal lens fiber differentiation. This chain is Fibroblast growth factor 2 (FGF2), found in Bos taurus (Bovine).